The sequence spans 350 residues: Phosphate acyltransferase (350 aa).

The protein belongs to the PlsX family. As to quaternary structure, homodimer. Probably interacts with PlsY.

The protein localises to the cytoplasm. The enzyme catalyses a fatty acyl-[ACP] + phosphate = an acyl phosphate + holo-[ACP]. The protein operates within lipid metabolism; phospholipid metabolism. Functionally, catalyzes the reversible formation of acyl-phosphate (acyl-PO(4)) from acyl-[acyl-carrier-protein] (acyl-ACP). This enzyme utilizes acyl-ACP as fatty acyl donor, but not acyl-CoA. The protein is Phosphate acyltransferase of Phenylobacterium zucineum (strain HLK1).